The primary structure comprises 291 residues: Quinol oxidase subunit 2 (291 aa).

Residues 1–28 form the signal peptide; the sequence is MQLKKAFWKLASLLPLSLLLFLGGCDKK. 2 consecutive transmembrane segments (helical) span residues 49–69 and 91–111; these read SFLLMSLIIAIVFILFTVILI and LEIIWTLVPVIIVIALSIPTV.

Belongs to the cytochrome c oxidase subunit 2 family.

Its subcellular location is the cell membrane. It carries out the reaction 2 a quinol + O2 = 2 a quinone + 2 H2O. Its function is as follows. Catalyzes quinol oxidation with the concomitant reduction of oxygen to water. Subunit II transfers the electrons from a quinol to the binuclear center of the catalytic subunit I. The protein is Quinol oxidase subunit 2 of Bacillus anthracis.